A 494-amino-acid polypeptide reads, in one-letter code: Monocarboxylate transporter 1 (494 aa).

The Cytoplasmic portion of the chain corresponds to 1–22 (MPPAIGGPVGYTPPDGGWGWAV). The helical transmembrane segment at 23-44 (VVGAFISIGFSYAFPKSITVFF) threads the bilayer. Lys-38 contributes to the (S)-lactate binding site. The Extracellular portion of the chain corresponds to 45-55 (KEIEIIFSATT). Residues 56 to 80 (SEVSWISSIMLAVMYAGGPISSILV) traverse the membrane as a helical segment. Residues 81–84 (NKYG) are Cytoplasmic-facing. The helical transmembrane segment at 85-105 (SRPVMIAGGCLSGCGLIAASF) threads the bilayer. The Extracellular portion of the chain corresponds to 106 to 109 (CNTV). The chain crosses the membrane as a helical span at residues 110-132 (QELYFCIGVIGGLGLAFNLNPAL). Topologically, residues 133–146 (TMIGKYFYKKRPLA) are cytoplasmic. A helical membrane pass occupies residues 147 to 169 (NGLAMAGSPVFLSTLAPLNQAFF). Residues 170-174 (GIFGW) lie on the Extracellular side of the membrane. The chain crosses the membrane as a helical span at residues 175 to 194 (RGSFLILGGLLLNCCVAGSL). At 195–254 (MRPIGPQQGKVEKLKSKESLQEAGKSDANTDLIGGSPKGEKLSVFQTVNKFLDLSLFTHR) the chain is on the cytoplasmic side. Ser-210, Ser-213, and Ser-220 each carry phosphoserine. A Phosphothreonine modification is found at Thr-224. Ser-230 carries the post-translational modification Phosphoserine. A helical membrane pass occupies residues 255–281 (GFLLYLSGNVVMFFGLFTPLVFLSNYG). Topologically, residues 282–288 (KSKHFSS) are extracellular. Residues 289 to 310 (EKSAFLLSILAFVDMVARPSMG) form a helical membrane-spanning segment. H(+) is bound at residue Asp-302. (S)-lactate is bound at residue Arg-306. The Cytoplasmic portion of the chain corresponds to 311 to 321 (LAANTRWIRPR). A helical membrane pass occupies residues 322 to 342 (VQYFFAASVVANGVCHLLAPL). The Extracellular portion of the chain corresponds to 343–346 (STTY). The chain crosses the membrane as a helical span at residues 347–368 (VGFCIYAGVFGFAFGWLSSVLF). At 369–382 (ETLMDLVGPQRFSS) the chain is on the cytoplasmic side. A helical membrane pass occupies residues 383–403 (AVGLVTIVECCPVLLGPPLLG). The Extracellular segment spans residues 404–414 (RLNDMYGDYKY). A helical membrane pass occupies residues 415-436 (TYWACGVILIIAGLYLFIGMGI). Residues 437–494 (NYRLVAKEQKAEEKKRDGKEDETSTDVDEKPKKTMKETQSPAPLQNSSGDPAEEESPV) lie on the Cytoplasmic side of the membrane. The span at 446 to 472 (KAEEKKRDGKEDETSTDVDEKPKKTMK) shows a compositional bias: basic and acidic residues. The segment at 446–494 (KAEEKKRDGKEDETSTDVDEKPKKTMKETQSPAPLQNSSGDPAEEESPV) is disordered. Thr-459 carries the post-translational modification Phosphothreonine. Ser-460 carries the post-translational modification Phosphoserine. At Thr-461 the chain carries Phosphothreonine. Over residues 473–485 (ETQSPAPLQNSSG) the composition is skewed to polar residues. Phosphoserine occurs at positions 476, 483, 484, and 492.

It belongs to the major facilitator superfamily. Monocarboxylate porter (TC 2.A.1.13) family. In terms of assembly, interacts with BSG. Interacts with EMB. Interaction with either BSG or EMB is required for expression at the cell membrane. In terms of tissue distribution, detected in erythrocytes (at protein level). Detected in brain, heart, kidney, lung, muscle, jejunum enterocytes and brain capillaries.

It is found in the cell membrane. The protein resides in the basolateral cell membrane. Its subcellular location is the apical cell membrane. It carries out the reaction (S)-lactate(in) + H(+)(in) = (S)-lactate(out) + H(+)(out). The enzyme catalyses pyruvate(out) + H(+)(out) = pyruvate(in) + H(+)(in). It catalyses the reaction acetoacetate(out) + H(+)(out) = acetoacetate(in) + H(+)(in). The catalysed reaction is (S)-3-hydroxybutanoate(out) + H(+)(out) = (S)-3-hydroxybutanoate(in) + H(+)(in). It carries out the reaction (R)-3-hydroxybutanoate(out) + H(+)(out) = (R)-3-hydroxybutanoate(in) + H(+)(in). The enzyme catalyses 3-methyl-2-oxobutanoate(out) + H(+)(out) = 3-methyl-2-oxobutanoate(in) + H(+)(in). It catalyses the reaction 4-methyl-2-oxopentanoate(out) + H(+)(out) = 4-methyl-2-oxopentanoate(in) + H(+)(in). With respect to regulation, inhibited by stilbene disulfonates, such as di-isothiocyanostilbene disulfonate(DIDS), a cross-linking reagent that forms covalent linkages with lysine groups. Bidirectional proton-coupled monocarboxylate transporter. Catalyzes the rapid transport across the plasma membrane of many monocarboxylates such as lactate, pyruvate, acetate and the ketone bodies acetoacetate and beta-hydroxybutyrate, and thus contributes to the maintenance of intracellular pH. The transport direction is determined by the proton motive force and the concentration gradient of the substrate monocarboxylate. MCT1 is a major lactate exporter. Plays a role in cellular responses to a high-fat diet by modulating the cellular levels of lactate and pyruvate that contribute to the regulation of central metabolic pathways and insulin secretion, with concomitant effects on plasma insulin levels and blood glucose homeostasis. Facilitates the protonated monocarboxylate form of succinate export, that its transient protonation upon muscle cell acidification in exercising muscle and ischemic heart. Functions via alternate outward- and inward-open conformation states. Protonation and deprotonation of 302-Asp is essential for the conformational transition. In Rattus norvegicus (Rat), this protein is Monocarboxylate transporter 1 (Slc16a1).